Reading from the N-terminus, the 1169-residue chain is Transcription-repair-coupling factor (1169 aa).

One can recognise a Helicase ATP-binding domain in the interval aspartate 634–isoleucine 795. An ATP-binding site is contributed by glycine 647–threonine 654. A DEEQ box motif is present at residues aspartate 748 to glutamine 751. The Helicase C-terminal domain occupies valine 809–asparagine 970.

It in the N-terminal section; belongs to the UvrB family. This sequence in the C-terminal section; belongs to the helicase family. RecG subfamily.

It localises to the cytoplasm. Its function is as follows. Couples transcription and DNA repair by recognizing RNA polymerase (RNAP) stalled at DNA lesions. Mediates ATP-dependent release of RNAP and its truncated transcript from the DNA, and recruitment of nucleotide excision repair machinery to the damaged site. The chain is Transcription-repair-coupling factor from Staphylococcus epidermidis (strain ATCC 12228 / FDA PCI 1200).